Consider the following 551-residue polypeptide: Xylulose kinase (551 aa).

4 residues coordinate substrate: histidine 114, arginine 185, aspartate 295, and asparagine 296. ATP is bound by residues tryptophan 370, 456–457, and asparagine 460; that span reads GA.

It belongs to the FGGY kinase family. In terms of assembly, monomer.

It catalyses the reaction D-xylulose + ATP = D-xylulose 5-phosphate + ADP + H(+). Functionally, phosphorylates D-xylulose to produce D-xylulose 5-phosphate, a molecule that may play an important role in the regulation of glucose metabolism and lipogenesis. The sequence is that of Xylulose kinase (Xylb) from Mus musculus (Mouse).